Consider the following 651-residue polypeptide: MGKKHKKHKSDKHLYEEYVEKPLKLVLKVGGNEVTELSTGSSGHDSSLFEDKNDHDKHKDRKRKKRKKGEKQIPGEEKGRKRRRVKEDKKKRDRDRVENEAEKDLQCHAPVRLDLPPEKPLTSSLAKQEEVEQTPLQEALNQLMRQLQRKDPSAFFSFPVTDFIAPGYSMIIKHPMDFSTMKEKIKNNDYQSIEELKDNFKLMCTNAMIYNKPETIYYKAAKKLLHSGMKILSQERIQSLKQSIDFMADLQKTRKQKDGTDTSQSGEDGGCWQREREDSGDAEAHAFKSPSKENKKKDKDMLEDKFKSNNLEREQEQLDRIVKESGGKLTRRLVNSQCEFERRKPDGTTTLGLLHPVDPIVGEPGYCPVRLGMTTGRLQSGVNTLQGFKEDKRNKVTPVLYLNYGPYSSYAPHYDSTFANISKDDSDLIYSTYGEDSDLPSDFSIHEFLATCQDYPYVMADSLLDVLTKGGHSRTLQEMEMSLPEDEGHTRTLDTAKEMEITEVEPPGRLDSSTQDRLIALKAVTNFGVPVEVFDSEEAEIFQKKLDETTRLLRELQEAQNERLSTRPPPNMICLLGPSYREMHLAEQVTNNLKELAQQVTPGDIVSTYGVRKAMGISIPSPVMENNFVDLTEDTEEPKKTDVAECGPGGS.

Lys21 participates in a covalent cross-link: Glycyl lysine isopeptide (Lys-Gly) (interchain with G-Cter in SUMO2). Positions 35–45 (TELSTGSSGHD) are enriched in polar residues. The tract at residues 35–132 (TELSTGSSGH…SSLAKQEEVE (98 aa)) is disordered. Positions 47 to 57 (SLFEDKNDHDK) are enriched in basic and acidic residues. A Glycyl lysine isopeptide (Lys-Gly) (interchain with G-Cter in SUMO2) cross-link involves residue Lys52. The segment covering 58 to 69 (HKDRKRKKRKKG) has biased composition (basic residues). The Nuclear localization signal motif lies at 65-96 (KRKKGEKQIPGEEKGRKRRRVKEDKKKRDRDR). Residues 70–106 (EKQIPGEEKGRKRRRVKEDKKKRDRDRVENEAEKDLQ) are compositionally biased toward basic and acidic residues. Glycyl lysine isopeptide (Lys-Gly) (interchain with G-Cter in SUMO2) cross-links involve residues Lys127, Lys186, Lys197, Lys201, Lys212, and Lys241. The Bromo domain occupies 131-235 (VEQTPLQEAL…HSGMKILSQE (105 aa)). The segment at 253-301 (TRKQKDGTDTSQSGEDGGCWQREREDSGDAEAHAFKSPSKENKKKDKDM) is disordered. The segment covering 273-301 (QREREDSGDAEAHAFKSPSKENKKKDKDM) has biased composition (basic and acidic residues). Residues Ser279 and Ser289 each carry the phosphoserine modification. Glycyl lysine isopeptide (Lys-Gly) (interchain with G-Cter in SUMO2) cross-links involve residues Lys305 and Lys307. N6-acetyllysine is present on Lys328. Residue Lys344 forms a Glycyl lysine isopeptide (Lys-Gly) (interchain with G-Cter in SUMO2) linkage. The residue at position 380 (Ser380) is a Phosphoserine. A Glycyl lysine isopeptide (Lys-Gly) (interchain with G-Cter in SUMO2) cross-link involves residue Lys389. Ser482 is subject to Phosphoserine. Thr514 carries the post-translational modification Phosphothreonine. Residues 536-567 (SEEAEIFQKKLDETTRLLRELQEAQNERLSTR) are a coiled coil. A Phosphoserine modification is found at Ser621.

Interacts with TRIM24, PTPN13 and DVL1. Identified in a complex with SMARCA4/BRG1, SMARCC1/BAF155, SMARCE1/BAF57, DPF2/BAF45D and ARID2, subunits of the SWI/SNF-B (PBAF) chromatin remodeling complex. Interacts with IRF2 and HNRPUL1. Interacts (via N-terminus) with TP53. Interacts (via C-terminus) with EP300. Interacts with BRCA1. Interacts (via bromo domain) with histone H3 (via N-terminus) acetylated at 'Lys-14' (H3K14ac). Has low affinity for histone H3 acetylated at 'Lys-9' (H3K9ac). Has the highest affinity for histone H3 that is acetylated both at 'Lys-9' (H3K9ac) and at 'Lys-14' (H3K14ac). Has very low affinity for non-acetylated histone H3. Interacts (via bromo domain) with histone H4 (via N-terminus) acetylated at 'Lys-8' (H3K8ac) (in vitro).

It localises to the nucleus. Its subcellular location is the chromosome. Its function is as follows. Acts both as coactivator and as corepressor. May play a role in chromatin remodeling. Activator of the Wnt signaling pathway in a DVL1-dependent manner by negatively regulating the GSK3B phosphotransferase activity. Induces dephosphorylation of GSK3B at 'Tyr-216'. Down-regulates TRIM24-mediated activation of transcriptional activation by AR. Transcriptional corepressor that down-regulates the expression of target genes. Binds to target promoters, leading to increased histone H3 acetylation at 'Lys-9' (H3K9ac). Binds to the ESR1 promoter. Recruits BRCA1 and POU2F1 to the ESR1 promoter. Coactivator for TP53-mediated activation of transcription of a set of target genes. Required for TP53-mediated cell-cycle arrest in response to oncogene activation. Promotes acetylation of TP53 at 'Lys-382', and thereby promotes efficient recruitment of TP53 to target promoters. Inhibits cell cycle progression from G1 to S phase. This chain is Bromodomain-containing protein 7 (BRD7), found in Homo sapiens (Human).